The chain runs to 822 residues: AP-1 complex subunit gamma-1 (822 aa).

Residues N593–E604 show a composition bias toward polar residues. Residues N593–D627 form a disordered region. One can recognise a GAE domain in the interval P702 to P817.

Belongs to the adaptor complexes large subunit family. As to quaternary structure, adaptor protein complex 1 (AP-1) is a heterotetramer composed of two large adaptins (gamma-type subunit AP1G1 and beta-type subunit AP1B1), a medium adaptin (mu-type subunit AP1M1 or AP1M2) and a small adaptin (sigma-type subunit AP1S1 or AP1S2 or AP1S3). Interacts (via GAE domain) with RABEP1. Interacts with EPS15. Interacts with SYNRG/gamma-synergin. Interacts (via GAE domain) with AP1AR (via coiled-coil domain). Interacts with CLN3 (via dileucine motif); this interaction facilitates lysosomal targeting. Interacts (via GAE domain) with AFTPH/aftiphilin; the interaction is required to recruit AFTPH/aftiphilin to the perinuclear region of the cell. In terms of tissue distribution, widely expressed.

Its subcellular location is the golgi apparatus. It localises to the cytoplasmic vesicle. The protein resides in the clathrin-coated vesicle membrane. The protein localises to the cytoplasm. It is found in the perinuclear region. Its subcellular location is the clathrin-coated vesicle. It localises to the membrane. The protein resides in the clathrin-coated pit. In terms of biological role, subunit of clathrin-associated adaptor protein complex 1 that plays a role in protein sorting in the late-Golgi/trans-Golgi network (TGN) and/or endosomes. The AP complexes mediate both the recruitment of clathrin to membranes and the recognition of sorting signals within the cytosolic tails of transmembrane cargo molecules. In association with AFTPH/aftiphilin in the aftiphilin/p200/gamma-synergin complex, involved in the trafficking of transferrin from early to recycling endosomes, and the membrane trafficking of furin and the lysosomal enzyme cathepsin D between the trans-Golgi network (TGN) and endosomes. This is AP-1 complex subunit gamma-1 (Ap1g1) from Mus musculus (Mouse).